We begin with the raw amino-acid sequence, 274 residues long: uncharacterized protein (274 aa).

5 consecutive transmembrane segments (helical) span residues 9–29 (SLLL…VSIL), 64–84 (WFWH…FFIL), 135–155 (LAGH…ALLL), 165–185 (MSSM…WQNA), and 219–239 (IIVY…LVLG).

This sequence belongs to the steroid 5-alpha reductase family.

It localises to the endoplasmic reticulum membrane. This is an uncharacterized protein from Schizosaccharomyces pombe (strain 972 / ATCC 24843) (Fission yeast).